Consider the following 406-residue polypeptide: Olfactomedin-like protein 3 (406 aa).

The first 21 residues, 1-21, serve as a signal peptide directing secretion; that stretch reads MGPSTPLLILFLLSWSGPLQG. Residues 25–101 adopt a coiled-coil conformation; the sequence is HLVEYMERRL…REVDYLETQN (77 aa). The Olfactomedin-like domain maps to 134–401; it reads DCGYTISQVR…QIVYKLEMRK (268 aa). A disulfide bond links Cys135 and Cys328. Residues Asn177 and Asn248 are each glycosylated (N-linked (GlcNAc...) asparagine).

Belongs to the OLFML3 family. In terms of tissue distribution, abundant in placenta, moderate in liver and heart, whereas fairly weak in other tissues examined. On term placenta, mainly localized extracellularly surrounding the syncytiotrophoblastic cells and very rarely expressed in the maternal decidua layer.

It is found in the secreted. Secreted scaffold protein that plays an essential role in dorsoventral patterning during early development. Stabilizes axial formation by restricting chordin (CHRD) activity on the dorsal side. Acts by facilitating the association between the tolloid proteases and their substrate chordin (CHRD), leading to enhance chordin (CHRD) degradation. May have matrix-related function involved in placental and embryonic development, or play a similar role in other physiological processes. This chain is Olfactomedin-like protein 3 (OLFML3), found in Homo sapiens (Human).